A 969-amino-acid chain; its full sequence is RNA polymerase-associated protein RapA (969 aa).

Positions 164-334 (EVGRRHAPRV…FARLRLLDPD (171 aa)) constitute a Helicase ATP-binding domain. 177 to 184 (DEVGLGKT) contacts ATP. Positions 280–283 (DEAH) match the DEAH box motif. The 188-residue stretch at 492–679 (RVNWLIEKIQ…ESAKLNQSLK (188 aa)) folds into the Helicase C-terminal domain.

It belongs to the SNF2/RAD54 helicase family. RapA subfamily. In terms of assembly, interacts with the RNAP. Has a higher affinity for the core RNAP than for the holoenzyme. Its ATPase activity is stimulated by binding to RNAP.

Its function is as follows. Transcription regulator that activates transcription by stimulating RNA polymerase (RNAP) recycling in case of stress conditions such as supercoiled DNA or high salt concentrations. Probably acts by releasing the RNAP, when it is trapped or immobilized on tightly supercoiled DNA. Does not activate transcription on linear DNA. Probably not involved in DNA repair. This chain is RNA polymerase-associated protein RapA, found in Vibrio atlanticus (strain LGP32) (Vibrio splendidus (strain Mel32)).